The sequence spans 505 residues: MEPQPGGARSCRRGAPGGACELSTTAESAAPMSLAIHSTTGTRYDLSVPHDETVEGLRKRLSQRLKVPKERLALLHKDTRLSSGKLQEFGVGDGSKLTLVPTVEAGLMSQASRPEQSVMQALESLTETQPPATPGPGRAAGGGFRKYRLILFKRPWHRQGPQSPERGGERPQVSDFLSGRSPLTLALRVGDHMMFVQLQLAAQHAPLQHRHVLAAAAAAAAAARGDSSIATPVSSPCRPVSSAARVPPVSSSPSSPVSPSPVTAGTFQSHAASTTCPEQTDCSPPASSNTTSTPGSSPTPRSRKPGAVIESFVNHAPGVFSGTFSGTLHPNCQDSSGRPRRDIGTILQILNDLLSATRHYQGMPASLTQLRCHAQCSPASPAPDLTPKTTSCEKLATPSLLQGQSQIRMCKPPGDRLRQTENRATRCKVERLQLLLQQKRLRRKARRDARGPYHWTPSRKAGRSDSSSSGGGGSPSEATGLGLDFEDSVWKPEVNPDIQSEFVVA.

The region spanning 32-106 is the Ubiquitin-like domain; that stretch reads MSLAIHSTTG…LTLVPTVEAG (75 aa). Disordered regions lie at residues 155-176, 228-305, and 440-485; these read PWHR…VSDF, SIAT…SRKP, and RLRR…GLDF. A compositionally biased stretch (low complexity) spans 238–262; the sequence is RPVSSAARVPPVSSSPSSPVSPSPV. A compositionally biased stretch (polar residues) spans 263–282; sequence TAGTFQSHAASTTCPEQTDC. The segment covering 283-300 has biased composition (low complexity); it reads SPPASSNTTSTPGSSPTP.

Interacts with GCK; the interaction occurs preferentially at low glucose levels. Interacts with the proteasome.

Its subcellular location is the nucleus. The protein resides in the cytoplasm. It localises to the cytosol. It is found in the nucleolus. Its function is as follows. Facilitates the ubiquitin-independent proteasomal degradation of stimulus-induced transcription factors such as FOSB, EGR1, NR4A1, and IRF4 to the proteasome for degradation. Promotes also the degradation of other substrates such as CBX4. Plays a role in inhibiting the activity of glucokinase GCK and both glucose-induced and basal insulin secretion. The protein is Midnolin of Rattus norvegicus (Rat).